Here is a 179-residue protein sequence, read N- to C-terminus: Transcription factor E (179 aa).

An HTH TFE/IIEalpha-type domain is found at 1 to 102 (MAKKKVKYTF…YWRFDSRKAA (102 aa)).

Belongs to the TFE family. Monomer. Interaction with RNA polymerase subunits RpoF and RpoE is necessary for Tfe stimulatory transcription activity. Able to interact with Tbp and RNA polymerase in the absence of DNA promoter. Interacts both with the preinitiation and elongation complexes.

Transcription factor that plays a role in the activation of archaeal genes transcribed by RNA polymerase. Facilitates transcription initiation by enhancing TATA-box recognition by TATA-box-binding protein (Tbp), and transcription factor B (Tfb) and RNA polymerase recruitment. Not absolutely required for transcription in vitro, but particularly important in cases where Tbp or Tfb function is not optimal. It dynamically alters the nucleic acid-binding properties of RNA polymerases by stabilizing the initiation complex and destabilizing elongation complexes. Seems to translocate with the RNA polymerase following initiation and acts by binding to the non template strand of the transcription bubble in elongation complexes. In Methanosphaera stadtmanae (strain ATCC 43021 / DSM 3091 / JCM 11832 / MCB-3), this protein is Transcription factor E.